The following is a 307-amino-acid chain: Glutaminase (307 aa).

Residues serine 66, asparagine 116, glutamate 160, asparagine 167, tyrosine 191, tyrosine 243, and valine 261 each coordinate substrate.

This sequence belongs to the glutaminase family. Homotetramer.

The catalysed reaction is L-glutamine + H2O = L-glutamate + NH4(+). The protein is Glutaminase of Pseudoalteromonas translucida (strain TAC 125).